Reading from the N-terminus, the 303-residue chain is uncharacterized protein (303 aa).

The HTH araC/xylS-type domain occupies 183–281 (KDILFYLNNN…GCSPSDYRRQ (99 aa)). 2 consecutive DNA-binding regions (H-T-H motif) follow at residues 200–221 (EQLSKKFRASVSYICHEFTKEY) and 248–271 (QAEISWRVGYENVDHFAKLFLRHV).

This is an uncharacterized protein from Escherichia coli (strain K12).